A 337-amino-acid polypeptide reads, in one-letter code: Heat-inducible transcription repressor HrcA (337 aa).

It belongs to the HrcA family.

In terms of biological role, negative regulator of class I heat shock genes (grpE-dnaK-dnaJ and groELS operons). Prevents heat-shock induction of these operons. The chain is Heat-inducible transcription repressor HrcA from Arthrobacter sp. (strain FB24).